We begin with the raw amino-acid sequence, 446 residues long: Cytochrome P450 monooxygenase ptmP (446 aa).

A helical membrane pass occupies residues 19-39; the sequence is VTVIWILMALVLLAYLILPNP. Cysteine 385 is a heme binding site. N-linked (GlcNAc...) asparagine glycosylation occurs at asparagine 430.

Belongs to the cytochrome P450 family. Heme serves as cofactor.

It localises to the membrane. It participates in secondary metabolite biosynthesis. In terms of biological role, cytochrome P450 monooxygenase; part of the gene cluster that mediates the biosynthesis of the indole diterpenes penitrems. The geranylgeranyl diphosphate (GGPP) synthase ptmG catalyzes the first step in penitrem biosynthesis via conversion of farnesyl pyrophosphate and isopentyl pyrophosphate into geranylgeranyl pyrophosphate (GGPP). Condensation of indole-3-glycerol phosphate with GGPP by the prenyl transferase ptmC then forms 3-geranylgeranylindole (3-GGI). Epoxidation by the FAD-dependent monooxygenase ptmM leads to a epoxidized-GGI that is substrate of the terpene cyclase ptmB for cyclization to yield paspaline. Paspaline is subsequently converted to 13-desoxypaxilline by the cytochrome P450 monooxygenase ptmP, the latter being then converted to paxilline by the cytochrome P450 monooxygenase ptmQ. Paxilline is converted to beta-paxitriol via C-10 ketoreduction by the short-chain dehydrogenase ptmH which can be monoprenylated at the C-20 by the indole diterpene prenyltransferase ptmD. A two-step elimination (acetylation and elimination) process performed by the O-acetyltransferase ptmV and ptmI leads to the production of the prenylated form of penijanthine. The FAD-linked oxidoreductase ptmO then converts the prenylated form of penijanthine into PC-M5 which is in turn transformed into PC-M4 by the aromatic dimethylallyltransferase ptmE. Five sequential oxidative transformations performed by the cytochrome P450 monooxygenases ptmK, ptmU, ptmL, ptmN and ptmJ yield the various penitrem compounds. PtmK, ptmU and ptmM are involved in the formation of the key bicyclic ring of penitrem C via the formation of the intermediates secopenitrem D and penitrem D. PtmL catalyzes the epoxidation of penitrem D and C to yield penitrem B and F, respectively. PtmJ catalyzes the last benzylic hydroxylation to convert penitrem B to prenitrem E and penitrem F to penitrem A. The polypeptide is Cytochrome P450 monooxygenase ptmP (Penicillium ochrochloron).